We begin with the raw amino-acid sequence, 416 residues long: Serine/threonine transporter SstT (416 aa).

9 consecutive transmembrane segments (helical) span residues Ser15–Pro35, Val49–Ile69, Ile82–Phe102, Ala141–Met161, Leu192–Gly212, Leu217–Phe237, Val288–Leu308, Val330–Ile350, and Leu356–Val376.

This sequence belongs to the dicarboxylate/amino acid:cation symporter (DAACS) (TC 2.A.23) family.

It is found in the cell inner membrane. It carries out the reaction L-serine(in) + Na(+)(in) = L-serine(out) + Na(+)(out). It catalyses the reaction L-threonine(in) + Na(+)(in) = L-threonine(out) + Na(+)(out). In terms of biological role, involved in the import of serine and threonine into the cell, with the concomitant import of sodium (symport system). In Aeromonas salmonicida (strain A449), this protein is Serine/threonine transporter SstT.